The primary structure comprises 408 residues: Translation initiation factor 2 subunit gamma (408 aa).

Residues 4–201 (QSEINIGLVG…TIEERIKTPK (198 aa)) form the tr-type G domain. Residues 13 to 20 (GHVDHGKT) are G1. Residues Asp-16, Thr-20, Gly-41, and Ser-43 each coordinate Mg(2+). 16 to 21 (DHGKTT) provides a ligand contact to GTP. A G2 region spans residues 41 to 45 (GISIR). Positions 56, 59, 71, and 74 each coordinate Zn(2+). Residues 88 to 91 (DAPG) are G3. Residues 144 to 147 (NKID) and 179 to 181 (SAQ) contribute to the GTP site. Residues 144 to 147 (NKID) form a G4 region. The G5 stretch occupies residues 179–181 (SAQ).

This sequence belongs to the TRAFAC class translation factor GTPase superfamily. Classic translation factor GTPase family. EIF2G subfamily. In terms of assembly, heterotrimer composed of an alpha, a beta and a gamma chain. The cofactor is Mg(2+).

It catalyses the reaction GTP + H2O = GDP + phosphate + H(+). In terms of biological role, eIF-2 functions in the early steps of protein synthesis by forming a ternary complex with GTP and initiator tRNA. The protein is Translation initiation factor 2 subunit gamma of Methanothermobacter thermautotrophicus (strain ATCC 29096 / DSM 1053 / JCM 10044 / NBRC 100330 / Delta H) (Methanobacterium thermoautotrophicum).